The following is a 262-amino-acid chain: MDDGYASVMPANAYNWTAVWRRNYLAWRKVALASLLGNLADPITNLFGLGFGLGLIVGRVEGTSYIAFLAAGMVAISAMTSATFETLYAAFARMDVKRTWEGILFTQLTLGDIVLGELVWAASKSVLAGTAIGIVAATLGYASWTSVLCAIPTIALTGLVFASLAMVVISLAPTYDYFVFYQSLVLTPMVFLCGAVFPTSQMPDSFQHFAGLLPLAHSVDLIRPVMLERGADNAALHVGALCVYAVLPFFASIALFRRRLLR.

The 227-residue stretch at 33–259 (ASLLGNLADP…FASIALFRRR (227 aa)) folds into the ABC transmembrane type-2 domain. 7 helical membrane passes run 37–57 (GNLA…GLIV), 64–84 (SYIA…SATF), 102–122 (GILF…VWAA), 125–145 (SVLA…ASWT), 149–169 (CAIP…MVVI), 177–197 (YFVF…GAVF), and 236–256 (LHVG…IALF).

It belongs to the ABC-2 integral membrane protein family. Lipooligosaccharide exporter (TC 3.A.1.102) subfamily. As to quaternary structure, the complex is composed of two ATP-binding proteins (NodI) and two transmembrane proteins (NodJ).

Its subcellular location is the cell inner membrane. Part of the ABC transporter complex NodIJ involved in the export of the nodulation factors (Nod factors), the bacterial signal molecules that induce symbiosis and subsequent nodulation induction. Nod factors are LCO (lipo-chitin oligosaccharide), a modified beta-1,4-linked N-acetylglucosamine oligosaccharide. This subunit encodes the transporter. In Bradyrhizobium diazoefficiens (strain JCM 10833 / BCRC 13528 / IAM 13628 / NBRC 14792 / USDA 110), this protein is Nodulation protein J (nodJ).